A 194-amino-acid polypeptide reads, in one-letter code: MSDSFSLLPLPLVSQRYAHALFDLVQKEGYVGDVEKALASFQVILEQDKALKHLVQSPFLSVKEQVKAVCAVCENLGLAHKKAGQILRNFLCVVAANRRLSALSGILQAFQRRVALSRGEVSAQVISAHPLDADQKKELCVALESVVGGKVTLRLSVDPAILGGLIVRLGLYQIDTSLATQLSSLKLALKKEVS.

It belongs to the ATPase delta chain family. F-type ATPases have 2 components, F(1) - the catalytic core - and F(0) - the membrane proton channel. F(1) has five subunits: alpha(3), beta(3), gamma(1), delta(1), epsilon(1). F(0) has three main subunits: a(1), b(2) and c(10-14). The alpha and beta chains form an alternating ring which encloses part of the gamma chain. F(1) is attached to F(0) by a central stalk formed by the gamma and epsilon chains, while a peripheral stalk is formed by the delta and b chains.

Its subcellular location is the cell inner membrane. Its function is as follows. F(1)F(0) ATP synthase produces ATP from ADP in the presence of a proton or sodium gradient. F-type ATPases consist of two structural domains, F(1) containing the extramembraneous catalytic core and F(0) containing the membrane proton channel, linked together by a central stalk and a peripheral stalk. During catalysis, ATP synthesis in the catalytic domain of F(1) is coupled via a rotary mechanism of the central stalk subunits to proton translocation. In terms of biological role, this protein is part of the stalk that links CF(0) to CF(1). It either transmits conformational changes from CF(0) to CF(1) or is implicated in proton conduction. This Bartonella bacilliformis (strain ATCC 35685 / KC583 / Herrer 020/F12,63) protein is ATP synthase subunit delta.